The chain runs to 612 residues: UvrABC system protein C (612 aa).

A GIY-YIG domain is found at 21–99; sequence HQPGVYRMYD…IKKYRPRYNV (79 aa). Residues 208-243 form the UVR domain; that stretch reads QQVIDELMNKMEQASTDLDFERAARFRDQIAALRKT.

Belongs to the UvrC family. Interacts with UvrB in an incision complex.

The protein resides in the cytoplasm. The UvrABC repair system catalyzes the recognition and processing of DNA lesions. UvrC both incises the 5' and 3' sides of the lesion. The N-terminal half is responsible for the 3' incision and the C-terminal half is responsible for the 5' incision. The polypeptide is UvrABC system protein C (Idiomarina loihiensis (strain ATCC BAA-735 / DSM 15497 / L2-TR)).